The sequence spans 132 residues: Small ribosomal subunit protein uS8c (132 aa).

The protein belongs to the universal ribosomal protein uS8 family. In terms of assembly, part of the 30S ribosomal subunit.

Its subcellular location is the plastid. The protein resides in the chloroplast. One of the primary rRNA binding proteins, it binds directly to 16S rRNA central domain where it helps coordinate assembly of the platform of the 30S subunit. The chain is Small ribosomal subunit protein uS8c (rps8) from Adiantum capillus-veneris (Maidenhair fern).